A 222-amino-acid chain; its full sequence is Phosphoribosylformylglycinamidine synthase subunit PurQ (222 aa).

The region spanning K2–V222 is the Glutamine amidotransferase type-1 domain. The Nucleophile role is filled by C86. Active-site residues include H194 and E196.

As to quaternary structure, part of the FGAM synthase complex composed of 1 PurL, 1 PurQ and 2 PurS subunits.

It localises to the cytoplasm. It carries out the reaction N(2)-formyl-N(1)-(5-phospho-beta-D-ribosyl)glycinamide + L-glutamine + ATP + H2O = 2-formamido-N(1)-(5-O-phospho-beta-D-ribosyl)acetamidine + L-glutamate + ADP + phosphate + H(+). It catalyses the reaction L-glutamine + H2O = L-glutamate + NH4(+). It participates in purine metabolism; IMP biosynthesis via de novo pathway; 5-amino-1-(5-phospho-D-ribosyl)imidazole from N(2)-formyl-N(1)-(5-phospho-D-ribosyl)glycinamide: step 1/2. Its function is as follows. Part of the phosphoribosylformylglycinamidine synthase complex involved in the purines biosynthetic pathway. Catalyzes the ATP-dependent conversion of formylglycinamide ribonucleotide (FGAR) and glutamine to yield formylglycinamidine ribonucleotide (FGAM) and glutamate. The FGAM synthase complex is composed of three subunits. PurQ produces an ammonia molecule by converting glutamine to glutamate. PurL transfers the ammonia molecule to FGAR to form FGAM in an ATP-dependent manner. PurS interacts with PurQ and PurL and is thought to assist in the transfer of the ammonia molecule from PurQ to PurL. This Cereibacter sphaeroides (strain ATCC 17023 / DSM 158 / JCM 6121 / CCUG 31486 / LMG 2827 / NBRC 12203 / NCIMB 8253 / ATH 2.4.1.) (Rhodobacter sphaeroides) protein is Phosphoribosylformylglycinamidine synthase subunit PurQ.